Reading from the N-terminus, the 652-residue chain is DNA mismatch repair protein MutL (652 aa).

Disordered stretches follow at residues Leu357–Ser377 and Pro425–Asp457. The span at Ser365–Tyr375 shows a compositional bias: polar residues.

It belongs to the DNA mismatch repair MutL/HexB family.

Functionally, this protein is involved in the repair of mismatches in DNA. It is required for dam-dependent methyl-directed DNA mismatch repair. May act as a 'molecular matchmaker', a protein that promotes the formation of a stable complex between two or more DNA-binding proteins in an ATP-dependent manner without itself being part of a final effector complex. This is DNA mismatch repair protein MutL from Colwellia psychrerythraea (strain 34H / ATCC BAA-681) (Vibrio psychroerythus).